The following is a 252-amino-acid chain: Imidazole glycerol phosphate synthase subunit HisF (252 aa).

Catalysis depends on residues Asp-11 and Asp-130.

Belongs to the HisA/HisF family. As to quaternary structure, heterodimer of HisH and HisF.

It is found in the cytoplasm. The enzyme catalyses 5-[(5-phospho-1-deoxy-D-ribulos-1-ylimino)methylamino]-1-(5-phospho-beta-D-ribosyl)imidazole-4-carboxamide + L-glutamine = D-erythro-1-(imidazol-4-yl)glycerol 3-phosphate + 5-amino-1-(5-phospho-beta-D-ribosyl)imidazole-4-carboxamide + L-glutamate + H(+). It functions in the pathway amino-acid biosynthesis; L-histidine biosynthesis; L-histidine from 5-phospho-alpha-D-ribose 1-diphosphate: step 5/9. Functionally, IGPS catalyzes the conversion of PRFAR and glutamine to IGP, AICAR and glutamate. The HisF subunit catalyzes the cyclization activity that produces IGP and AICAR from PRFAR using the ammonia provided by the HisH subunit. The protein is Imidazole glycerol phosphate synthase subunit HisF of Staphylococcus aureus (strain bovine RF122 / ET3-1).